The sequence spans 449 residues: Bifunctional protein GlmU (449 aa).

Residues Met-1 to Arg-230 form a pyrophosphorylase region. Residues Leu-11–Gly-14, Lys-25, Gln-74, Gly-79–Thr-80, Tyr-102–Asp-104, Gly-142, Glu-156, Asn-171, and Asn-228 each bind UDP-N-acetyl-alpha-D-glucosamine. Asp-104 serves as a coordination point for Mg(2+). Asn-228 serves as a coordination point for Mg(2+). A linker region spans residues Ser-231–Asn-251. Residues Gly-252–Asp-449 form an N-acetyltransferase region. The UDP-N-acetyl-alpha-D-glucosamine site is built by Arg-317 and Lys-335. Residue His-347 is the Proton acceptor of the active site. UDP-N-acetyl-alpha-D-glucosamine-binding residues include Tyr-350 and Asn-361. Acetyl-CoA is bound by residues Ala-364, Asn-370–Tyr-371, Ser-389, Ala-407, and Arg-424.

It in the N-terminal section; belongs to the N-acetylglucosamine-1-phosphate uridyltransferase family. The protein in the C-terminal section; belongs to the transferase hexapeptide repeat family. As to quaternary structure, homotrimer. Mg(2+) is required as a cofactor.

The protein resides in the cytoplasm. It catalyses the reaction alpha-D-glucosamine 1-phosphate + acetyl-CoA = N-acetyl-alpha-D-glucosamine 1-phosphate + CoA + H(+). The catalysed reaction is N-acetyl-alpha-D-glucosamine 1-phosphate + UTP + H(+) = UDP-N-acetyl-alpha-D-glucosamine + diphosphate. It functions in the pathway nucleotide-sugar biosynthesis; UDP-N-acetyl-alpha-D-glucosamine biosynthesis; N-acetyl-alpha-D-glucosamine 1-phosphate from alpha-D-glucosamine 6-phosphate (route II): step 2/2. Its pathway is nucleotide-sugar biosynthesis; UDP-N-acetyl-alpha-D-glucosamine biosynthesis; UDP-N-acetyl-alpha-D-glucosamine from N-acetyl-alpha-D-glucosamine 1-phosphate: step 1/1. It participates in bacterial outer membrane biogenesis; LPS lipid A biosynthesis. Functionally, catalyzes the last two sequential reactions in the de novo biosynthetic pathway for UDP-N-acetylglucosamine (UDP-GlcNAc). The C-terminal domain catalyzes the transfer of acetyl group from acetyl coenzyme A to glucosamine-1-phosphate (GlcN-1-P) to produce N-acetylglucosamine-1-phosphate (GlcNAc-1-P), which is converted into UDP-GlcNAc by the transfer of uridine 5-monophosphate (from uridine 5-triphosphate), a reaction catalyzed by the N-terminal domain. The polypeptide is Bifunctional protein GlmU (Paramagnetospirillum magneticum (strain ATCC 700264 / AMB-1) (Magnetospirillum magneticum)).